The chain runs to 150 residues: Transmembrane protein PMIS2 (150 aa).

Over residues 1 to 12 (MALKPPSATQPA) the composition is skewed to low complexity. The disordered stretch occupies residues 1-61 (MALKPPSATQ…EPQEPTQTPE (61 aa)). Positions 13–22 (PNAPATPDAP) are enriched in pro residues. The span at 23-61 (PTTGDPGASAAPGSPTTTGGPGAPAEVPQEPQEPTQTPE) shows a compositional bias: low complexity. Helical transmembrane passes span 71–91 (LCLT…ALYF) and 130–150 (GWFG…LVLY).

Belongs to the CD225/Dispanin family.

The protein localises to the membrane. May play a role in spermatozoa mobility. The protein is Transmembrane protein PMIS2 of Homo sapiens (Human).